An 838-amino-acid polypeptide reads, in one-letter code: Collagen alpha-2(I) chain (838 aa).

Residues 1 to 838 (GPMGIMGPRG…GTVGPAGIRS (838 aa)) form a disordered region. The segment covering 11 to 38 (FQGPAGEPGEPGQTGPAGARGPAGPPGK) has biased composition (low complexity). A compositionally biased stretch (basic and acidic residues) spans 39–53 (AGEDGHPGKPGRPGE). Composition is skewed to low complexity over residues 101 to 122 (SRGS…SAGP), 137 to 147 (PVGNTGPAGPA), 215 to 236 (NGES…RGIP), and 329 to 344 (AGNR…NGAQ). Residues 351–360 (GVQGGKGEQG) show a composition bias toward gly residues. Low complexity-rich tracts occupy residues 407 to 424 (PGES…SRGP) and 436 to 446 (EPGVVGAPGTA). Residues 447–456 (GPAGSGGIPG) are compositionally biased toward gly residues. 3 stretches are compositionally biased toward low complexity: residues 479-523 (VGTT…PRGT), 530-550 (VGPA…QPGA), and 568-581 (SAGP…PGPA). Gly residues predominate over residues 582–591 (GSRGDGGPPG). Residues 593–602 (TGFPGAAGRT) show a composition bias toward low complexity. Over residues 633–642 (GETGAGGPPG) the composition is skewed to gly residues. The segment covering 649–689 (TAGPQGIIGAPGIIGIPGSRGIPGVSGSVGEPGPIGISGPP) has biased composition (low complexity). Residues 693–702 (GPSGGVGNPG) show a composition bias toward gly residues. Composition is skewed to low complexity over residues 703-718 (VNGA…NPGN), 736-758 (YAGN…VGPA), and 766-781 (EPGP…AIGP).

Belongs to the fibrillar collagen family. In terms of assembly, trimers of one alpha 2(I) and two alpha 1(I) chains. Interacts (via C-terminus) with TMEM131 (via PapD-L domain); the interaction is direct and is involved in assembly and TRAPPIII ER-to-Golgi transport complex-dependent secretion of collagen. Prolines at the third position of the tripeptide repeating unit (G-X-Y) are hydroxylated in some or all of the chains. Forms the fibrils of tendon, ligaments and bones. In bones, the fibrils are mineralized with calcium hydroxyapatite.

The protein resides in the secreted. It localises to the extracellular space. The protein localises to the extracellular matrix. Type I collagen is a member of group I collagen (fibrillar forming collagen). This Cyclopes didactylus (Silky anteater) protein is Collagen alpha-2(I) chain.